The primary structure comprises 438 residues: Transposon Ty2-F Gag polyprotein (438 aa).

Composition is skewed to polar residues over residues 1–11 (MESQQLHQNPH), 19–39 (ASVTSKEVPSNQDPLAVSASN), and 49–60 (KVNSQQETTPGT). Disordered stretches follow at residues 1-86 (MESQ…GQYQ), 366-397 (VSRTSPNTTNTKVTTRNYHRTNSSKPRAAKAH), and 419-438 (SSQYLSDDNELSLRPATERI). The segment at 295-397 (ENNINVSDRL…SSKPRAAKAH (103 aa)) is RNA-binding. Low complexity predominate over residues 369-381 (TSPNTTNTKVTTR).

As to quaternary structure, homotrimer.

It localises to the cytoplasm. Its function is as follows. Capsid protein (CA) is the structural component of the virus-like particle (VLP), forming the shell that encapsulates the retrotransposons dimeric RNA genome. The particles are assembled from trimer-clustered units and there are holes in the capsid shells that allow for the diffusion of macromolecules. CA also has nucleocapsid-like chaperone activity, promoting primer tRNA(i)-Met annealing to the multipartite primer-binding site (PBS), dimerization of Ty2 RNA and initiation of reverse transcription. In Saccharomyces cerevisiae (strain ATCC 204508 / S288c) (Baker's yeast), this protein is Transposon Ty2-F Gag polyprotein (TY2A-F).